A 136-amino-acid polypeptide reads, in one-letter code: Probable 5-hydroxyisourate hydrolase ZK697.8 (136 aa).

A signal peptide spans 1–19 (MIKFLLFLAIAAATVISNA). 3 residues coordinate substrate: H31, R69, and Y133.

Belongs to the transthyretin family. 5-hydroxyisourate hydrolase subfamily. Homotetramer.

It carries out the reaction 5-hydroxyisourate + H2O = 5-hydroxy-2-oxo-4-ureido-2,5-dihydro-1H-imidazole-5-carboxylate + H(+). Catalyzes the hydrolysis of 5-hydroxyisourate (HIU) to 2-oxo-4-hydroxy-4-carboxy-5-ureidoimidazoline (OHCU). This is Probable 5-hydroxyisourate hydrolase ZK697.8 from Caenorhabditis elegans.